A 241-amino-acid chain; its full sequence is MTALPATSIAAPSLDDLDALNAHLETLRADERVAWALQHGPQQAALSSSFGAQSAVTLHLLTQQRPDIPVILIDTGYLFPETYRFADALTERLSLNLQVYRPLVSRAWMEARHGRLWEQGMVGIDQYNNLRKVEPMRRALDELNVGTWFTGLRRSQSGGRAQTPIVQKRGDRYKISPIADWTDRDVWQYLQAHALPYHPLWEQGYVSIGDFHTTRRWEPGMREEDTRFFGLKRECGIHEDI.

Cys235 serves as the catalytic Nucleophile; cysteine thiosulfonate intermediate.

Belongs to the PAPS reductase family. CysH subfamily.

The protein localises to the cytoplasm. The enzyme catalyses [thioredoxin]-disulfide + sulfite + adenosine 3',5'-bisphosphate + 2 H(+) = [thioredoxin]-dithiol + 3'-phosphoadenylyl sulfate. It participates in sulfur metabolism; hydrogen sulfide biosynthesis; sulfite from sulfate: step 3/3. Its function is as follows. Catalyzes the formation of sulfite from phosphoadenosine 5'-phosphosulfate (PAPS) using thioredoxin as an electron donor. This Xanthomonas campestris pv. campestris (strain 8004) protein is Phosphoadenosine 5'-phosphosulfate reductase.